The following is a 197-amino-acid chain: Na(+)-translocating NADH-quinone reductase subunit E (197 aa).

6 consecutive transmembrane segments (helical) span residues 11–31 (SVFI…FLAV), 35–55 (VSTA…SVPV), 76–96 (FLKF…LEMF), 108–128 (LGIY…VSFM), 139–159 (VVYG…LAGI), and 175–195 (LGIT…FSGI).

The protein belongs to the NqrDE/RnfAE family. Composed of six subunits; NqrA, NqrB, NqrC, NqrD, NqrE and NqrF.

It is found in the cell inner membrane. It catalyses the reaction a ubiquinone + n Na(+)(in) + NADH + H(+) = a ubiquinol + n Na(+)(out) + NAD(+). Functionally, NQR complex catalyzes the reduction of ubiquinone-1 to ubiquinol by two successive reactions, coupled with the transport of Na(+) ions from the cytoplasm to the periplasm. NqrA to NqrE are probably involved in the second step, the conversion of ubisemiquinone to ubiquinol. The sequence is that of Na(+)-translocating NADH-quinone reductase subunit E from Neisseria meningitidis serogroup C (strain 053442).